A 131-amino-acid polypeptide reads, in one-letter code: Protein Turandot M (131 aa).

Residues 1-23 (MNPTVYLSCLVVFSLFYLGKAQA) form the signal peptide.

Belongs to the Turandot family.

The protein localises to the secreted. Its function is as follows. A humoral factor that may play a role in stress tolerance. Requires Mekk1 expression in the fat body to regulate response to septic injury and consequent immune response. The sequence is that of Protein Turandot M from Drosophila yakuba (Fruit fly).